Consider the following 168-residue polypeptide: ATP synthase subunit b (168 aa).

Residues 9 to 29 (SIPFGTIAYTLFIFLLLLVML) form a helical membrane-spanning segment.

This sequence belongs to the ATPase B chain family. As to quaternary structure, F-type ATPases have 2 components, F(1) - the catalytic core - and F(0) - the membrane proton channel. F(1) has five subunits: alpha(3), beta(3), gamma(1), delta(1), epsilon(1). F(0) has three main subunits: a(1), b(2) and c(10-14). The alpha and beta chains form an alternating ring which encloses part of the gamma chain. F(1) is attached to F(0) by a central stalk formed by the gamma and epsilon chains, while a peripheral stalk is formed by the delta and b chains.

The protein resides in the cell membrane. In terms of biological role, f(1)F(0) ATP synthase produces ATP from ADP in the presence of a proton or sodium gradient. F-type ATPases consist of two structural domains, F(1) containing the extramembraneous catalytic core and F(0) containing the membrane proton channel, linked together by a central stalk and a peripheral stalk. During catalysis, ATP synthesis in the catalytic domain of F(1) is coupled via a rotary mechanism of the central stalk subunits to proton translocation. Its function is as follows. Component of the F(0) channel, it forms part of the peripheral stalk, linking F(1) to F(0). This Bacillus cereus (strain B4264) protein is ATP synthase subunit b.